Here is a 1066-residue protein sequence, read N- to C-terminus: Cytoplasmic dynein 2 intermediate chain 1 (1066 aa).

Disordered regions lie at residues 22-366 (LWAI…ENAR) and 381-408 (YEDDFEVCDGDDDESSNEPESREKLEEL). Serine 30 bears the Phosphoserine mark. Composition is skewed to basic and acidic residues over residues 30-135 (SKEE…EELR), 147-171 (ETRDRQLLERAERKGRSVSKVRSEE), 180-256 (DEDR…EERH), 264-308 (GFHF…KRDG), and 316-336 (NLVRNHGKDKDSRRKHGHEEG). The residue at position 247 (serine 247) is a Phosphoserine. 2 stretches are compositionally biased toward acidic residues: residues 351-362 (ETVEIEKEETDL) and 381-397 (YEDDFEVCDGDDDESSN). The span at 399–408 (PESREKLEEL) shows a compositional bias: basic and acidic residues. Positions 473 to 552 (ASHRQKSRTQ…DIQTEEIETR (80 aa)) are binding to the DYNLT2B-DYNLT1/DYNLT3 dimer. WD repeat units follow at residues 694-734 (ICES…RLHY), 775-821 (VHKK…KADI), 907-947 (IRPV…PLLQ), and 952-992 (TDSH…LGPV).

Belongs to the dynein light intermediate chain family. Intermediate chain of the cytoplasmic dynein complex 2, a multisubunit complex, composed at least of eleven different proteins. The cytoplasmic dynein 2 complex consists of two catalytic heavy chains (HCs) and a number of non-catalytic subunits presented by intermediate chains (ICs), light intermediate chains (LICs) and light chains (LCs). Among them, a heavy chain (DYNC2H1), two intermediate chains (DYNC2I2 and DYNC2I1), a light intermediate chain (DYNC2LI1), and a light chain (DYNLT2B) are unique to the cytoplasmic dynein complex 2, but a subset of the light chains are also shared by dynein-1 and dynein-2 complexes. Interacts with DYNC2I2; their C-terminal domains each bind a copy of the heavy chain, and their extended N-terminal regions are held together by an array of light chain dimers. Interacts with DYNLT2B. Interacts (via the N-terminal half) with DYNLT2B-DYNLT1 dimer or with DYNLT2B-DYNLT3 dimer; this interaction is crucial for retrograde trafficking of ciliary proteins. As to expression, expressed in chondrocytes (at protein level).

The protein localises to the cell projection. It is found in the cilium. It localises to the cytoplasm. The protein resides in the cytoskeleton. Its subcellular location is the microtubule organizing center. The protein localises to the centrosome. In terms of biological role, acts as one of several non-catalytic accessory components of the cytoplasmic dynein 2 complex (dynein-2 complex), a motor protein complex that drives the movement of cargos along microtubules within cilia and flagella in concert with the intraflagellar transport (IFT) system. DYNC2I1 plays a major role in retrograde ciliary protein trafficking in cilia and flagella. Also requires to maintain a functional transition zone. This chain is Cytoplasmic dynein 2 intermediate chain 1, found in Homo sapiens (Human).